Reading from the N-terminus, the 352-residue chain is MDSNASLPLNVSGGTQATPAGLVVLDVFSYLILVVTFVLGVLGNGLVIWVTGFRMTHTVTTISYLNLALADFSFTSTLPFFIVTKALGGHWPFGWFLCKFVFTIVDINLFGSVFLIALIALDRCICVLHPVWAQNHRNVSLAKKVIVGPWICALLLTLPVIIRVTTLSHPRAPGKMACTFDWSPWTEDPAEKLKVAISMFMVRGIIRFIIGFSTPMSIVAVCYGLIATKIHRQGLIKSSRPLRVLSFVVASFLLCWSPYQIAALIATVRIRELLLGMGKDLRIVLDVTSFVAFFNSCLNPMLYVFMGQDFRERLIHSLPASLERALSEDSAQTSDTGTNSTSAPAEAELQAI.

Topologically, residues Met1 to Val27 are extracellular. Asn4 and Asn10 each carry an N-linked (GlcNAc...) asparagine glycan. Residues Phe28 to Val50 form a helical membrane-spanning segment. The Cytoplasmic portion of the chain corresponds to Thr51–Thr61. A helical membrane pass occupies residues Ile62–Val83. The Extracellular portion of the chain corresponds to Thr84–Phe100. Cys98 and Cys178 form a disulfide bridge. A helical transmembrane segment spans residues Val101 to Leu121. Over Asp122 to Ser140 the chain is Cytoplasmic. The helical transmembrane segment at Leu141–Ile162 threads the bilayer. Residues Arg163 to Arg207 are Extracellular-facing. The chain crosses the membrane as a helical span at residues Phe208–Thr228. The Cytoplasmic segment spans residues Lys229–Val244. Residues Leu245 to Val268 form a helical membrane-spanning segment. The Extracellular portion of the chain corresponds to Arg269–Val287. Residues Thr288–Gly307 traverse the membrane as a helical segment. At Gln308–Ile352 the chain is on the cytoplasmic side.

The protein belongs to the G-protein coupled receptor 1 family. In terms of processing, phosphorylated; which is necessary for desensitization. As to expression, neutrophils.

It is found in the cell membrane. High affinity receptor for N-formyl-methionyl peptides (fMLP), which are powerful neutrophil chemotactic factors. Binding of fMLP to the receptor stimulates intracellular calcium mobilization and superoxide anion release. This response is mediated via a G-protein that activates a phosphatidylinositol-calcium second messenger system. Receptor for TAFA4, mediates its effects on chemoattracting macrophages, promoting phagocytosis and increasing ROS release. Receptor for cathepsin CTSG, leading to increased phagocyte chemotaxis. This Oryctolagus cuniculus (Rabbit) protein is fMet-Leu-Phe receptor (FPR1).